The chain runs to 1139 residues: Sterol regulatory element-binding protein 2 (1139 aa).

A transcriptional activation (acidic) region spans residues 1–50 (MDESSELGGLETMDTLTELGDELTLGDIDEMLQFVSNQVGEFPDLFSEQL). Residues 1 to 479 (MDESSELGGL…VALGMVDRSR (479 aa)) are Cytoplasmic-facing. 2 disordered regions span residues 48-104 (EQLC…SPST) and 119-143 (TPPR…SAQL). Residues 61–77 (GSSSSSNSSSSSGSNSR) are compositionally biased toward low complexity. The span at 90 to 104 (RSFSQVPLPTFSPST) shows a compositional bias: polar residues. Residues 119–138 (TPPRATPVLQPRPQPQPQPQ) show a composition bias toward pro residues. An interaction with LMNA region spans residues 235-489 (QQVPVLVQPQ…ILLCVLTFLG (255 aa)). One can recognise a bHLH domain in the interval 328–378 (ERRTTHNIIEKRYRSSINDKIIELKDLVMGTDAKMHKSGVLRKAIDYIKYL). The interval 378–399 (LQQVNHKLRQENMVLKLANQKN) is leucine-zipper. Lys-462 is covalently cross-linked (Glycyl lysine isopeptide (Lys-Gly) (interchain with G-Cter in SUMO2)). The chain crosses the membrane as a helical span at residues 480-500 (ILLCVLTFLGLSFSPLTSLLQ). Residues 501-531 (WGGAHDTDQHPYSGSGRSVLSLESGSGGWFD) are Lumenal-facing. Residues 532 to 552 (WMMPTLLLWLVNGVIVLSVFV) form a helical membrane-spanning segment. The Cytoplasmic segment spans residues 553–1139 (KLLVHGEPVI…LGGGTAIAAS (587 aa)). The residue at position 1096 (Ser-1096) is a Phosphoserine.

This sequence belongs to the SREBP family. Homodimer; efficient DNA binding of the soluble transcription factor fragment requires dimerization with another bHLH protein. Interacts with LMNA. As to quaternary structure, forms a tight complex with SCAP, the SCAP-SREBP complex, in the endoplasmic reticulum membrane and the Golgi apparatus. Interacts with PAQR3; the interaction anchors the SCAP-SREBP complex to the Golgi apparatus in low cholesterol conditions. Interacts (via C-terminal domain) with RNF139. Processed in the Golgi apparatus, releasing the protein from the membrane. At low cholesterol the SCAP-SREBP complex is recruited into COPII vesicles for export from the endoplasmic reticulum. In the Golgi, complex SREBPs are cleaved sequentially by site-1 (MBTPS1, S1P) and site-2 (MBTPS2, S2P) proteases. The first cleavage by site-1 protease occurs within the luminal loop, the second cleavage by site-2 protease occurs within the first transmembrane domain, releasing the transcription factor from the Golgi membrane. Apoptosis triggers cleavage by the cysteine proteases caspase-3 and caspase-7. Cleavage and activation is induced by mediated cholesterol efflux. Post-translationally, phosphorylated by AMPK, leading to suppress protein processing and nuclear translocation, and repress target gene expression. In terms of processing, SCAP-free SREBF2 is ubiquitinated by the BCR(ARMC5) complex, leading to its degradation. Ubiquitinated; the nuclear form has a rapid turnover and is rapidly ubiquitinated and degraded by the proteasome in the nucleus.

Its subcellular location is the endoplasmic reticulum membrane. The protein resides in the golgi apparatus membrane. The protein localises to the cytoplasmic vesicle. It is found in the COPII-coated vesicle membrane. It localises to the nucleus. Its activity is regulated as follows. Activation by cleavage is down-regulated upon activation of SIRT3-dependent PRKAA1/AMPK-alpha signaling cascade which leads to inhibition of ATP-consuming lipogenesis to restore cellular energy balance. Its function is as follows. Precursor of the transcription factor form (Processed sterol regulatory element-binding protein 2), which is embedded in the endoplasmic reticulum membrane. Low sterol concentrations promote processing of this form, releasing the transcription factor form that translocates into the nucleus and activates transcription of genes involved in cholesterol biosynthesis. In terms of biological role, key transcription factor that regulates expression of genes involved in cholesterol biosynthesis. Binds to the sterol regulatory element 1 (SRE-1) (5'-ATCACCCCAC-3'). Has dual sequence specificity binding to both an E-box motif (5'-ATCACGTGA-3') and to SRE-1 (5'-ATCACCCCAC-3'). Regulates transcription of genes related to cholesterol synthesis pathway. This Cricetulus griseus (Chinese hamster) protein is Sterol regulatory element-binding protein 2 (SREBF2).